A 58-amino-acid chain; its full sequence is UPF0434 protein Daro_3207 (58 aa).

The protein belongs to the UPF0434 family.

In Dechloromonas aromatica (strain RCB), this protein is UPF0434 protein Daro_3207.